We begin with the raw amino-acid sequence, 772 residues long: 5-methyltetrahydropteroyltriglutamate--homocysteine methyltransferase (772 aa).

5-methyltetrahydropteroyltri-L-glutamate contacts are provided by residues 24 to 27 (RELK) and K120. L-homocysteine contacts are provided by residues 446-448 (IGS) and E499. L-methionine is bound by residues 446–448 (IGS) and E499. Position 576 (W576) interacts with 5-methyltetrahydropteroyltri-L-glutamate. Position 614 (D614) interacts with L-homocysteine. L-methionine is bound at residue D614. Residue E620 participates in 5-methyltetrahydropteroyltri-L-glutamate binding. Residues H656, C658, and E680 each contribute to the Zn(2+) site. H709 (proton donor) is an active-site residue. C741 contributes to the Zn(2+) binding site.

Belongs to the vitamin-B12 independent methionine synthase family. It depends on Zn(2+) as a cofactor.

It catalyses the reaction 5-methyltetrahydropteroyltri-L-glutamate + L-homocysteine = tetrahydropteroyltri-L-glutamate + L-methionine. It functions in the pathway amino-acid biosynthesis; L-methionine biosynthesis via de novo pathway; L-methionine from L-homocysteine (MetE route): step 1/1. Functionally, catalyzes the transfer of a methyl group from 5-methyltetrahydrofolate to homocysteine resulting in methionine formation. This chain is 5-methyltetrahydropteroyltriglutamate--homocysteine methyltransferase, found in Streptomyces coelicolor (strain ATCC BAA-471 / A3(2) / M145).